The sequence spans 326 residues: tRNA-modifying protein YgfZ (326 aa).

Folate-binding residues include Trp-27 and Trp-189.

This sequence belongs to the tRNA-modifying YgfZ family.

It localises to the cytoplasm. Its function is as follows. Folate-binding protein involved in regulating the level of ATP-DnaA and in the modification of some tRNAs. It is probably a key factor in regulatory networks that act via tRNA modification, such as initiation of chromosomal replication. This is tRNA-modifying protein YgfZ from Escherichia coli O6:H1 (strain CFT073 / ATCC 700928 / UPEC).